The sequence spans 347 residues: MDESNSQFEKRKRDHIRIALDPRSQTDGQNGLDSITLIHEALPDLNFKEVDISTSFFFSGESIPLSSPIFISSMTAGHEKGREINEALARLSDRRQILMGVGSQRRELEDSNAAEEWARVRKQAPKARLLGNIGIAQLIKSPIDKIRRLIDSTEAVALFVHLNPLQEALQPEGTTDFKNGLAAIENLVKLAGVPVIVKETGCGFSVDTLKRLSSTGIYGVDVSGKGGTHWGRVEGYRSEESDMLYHVAQTFANWGISTKQSMLNAIDARVEYQLWASGGVRNGLEIGKLMALGASKVGVAKPFLEAALQGDEALEKLLTQLETELKVTMFCTGSRNLKDLQSKKVIQ.

The interval 1–31 is disordered; it reads MDESNSQFEKRKRDHIRIALDPRSQTDGQNG. Basic and acidic residues predominate over residues 8–20; sequence FEKRKRDHIRIAL. A substrate-binding site is contributed by 11 to 12; the sequence is RK. Residues serine 72, 73-75, serine 103, and asparagine 132 contribute to the FMN site; that span reads SMT. 103–105 is a binding site for substrate; sequence SQR. Position 166 (glutamine 166) interacts with substrate. Glutamate 167 lines the Mg(2+) pocket. Residues lysine 198, serine 223, threonine 228, 279 to 281, and 300 to 301 contribute to the FMN site; these read GVR and AK.

It belongs to the IPP isomerase type 2 family. As to quaternary structure, homooctamer. Dimer of tetramers. It depends on FMN as a cofactor. NADPH is required as a cofactor. The cofactor is Mg(2+).

The protein resides in the cytoplasm. The catalysed reaction is isopentenyl diphosphate = dimethylallyl diphosphate. Its function is as follows. Involved in the biosynthesis of isoprenoids. Catalyzes the 1,3-allylic rearrangement of the homoallylic substrate isopentenyl (IPP) to its allylic isomer, dimethylallyl diphosphate (DMAPP). In Bdellovibrio bacteriovorus (strain ATCC 15356 / DSM 50701 / NCIMB 9529 / HD100), this protein is Isopentenyl-diphosphate delta-isomerase.